A 313-amino-acid polypeptide reads, in one-letter code: LOB domain-containing protein 36 (313 aa).

Positions 6 to 107 (SPCAACKFLR…HDLENAKKEL (102 aa)) constitute an LOB domain. Residues 245 to 313 (GNFVDSPSTN…SEEGRRNVIG (69 aa)) form a disordered region. Residues 249–260 (DSPSTNNNYHTD) are compositionally biased toward polar residues. Over residues 280–302 (PSQSSQPLPLQTQETQTQTQPNS) the composition is skewed to low complexity.

This sequence belongs to the LOB domain-containing protein family. Expressed in trichomes, at the base of many lateral organs, including branching points of the inflorescence and floral organs and in the distal part of the pistil at stages when style and stigma start to develop. Also detected in pedicels and at the base of petals and sepals.

In terms of biological role, controls the proximal-distal patterning in petals and the adaxial-abaxial determination of leaves. Involved in the repression of the homeobox gene BP. The polypeptide is LOB domain-containing protein 36 (LBD36) (Arabidopsis thaliana (Mouse-ear cress)).